The primary structure comprises 629 residues: Long-chain-fatty-acid--AMP ligase FadD32 (629 aa).

ATP is bound by residues 186-191, serine 341, alanine 345, aspartate 468, and arginine 482; that span reads TSGSTR.

Belongs to the ATP-dependent AMP-binding enzyme family. As to quaternary structure, monomer.

The enzyme catalyses a long-chain fatty acid + holo-[ACP] + ATP = a long-chain fatty acyl-[ACP] + AMP + diphosphate. It catalyses the reaction dodecanoate + ATP + H(+) = dodecanoyl-AMP + diphosphate. The catalysed reaction is tetradecanoate + ATP + H(+) = tetradecanoyl-AMP + diphosphate. The protein operates within lipid metabolism; mycolic acid biosynthesis. Its activity is regulated as follows. The acyl-AMP ligase activity is inhibited by the alkylphosphate esters of AMP, adenosine 50-dodecylphosphate (AMPC12) and eicosyl-AMP (AMPC20). In terms of biological role, involved in the biosynthesis of mycolic acids. Catalyzes the activation of long-chain fatty acids as acyl-adenylates (acyl-AMP), which are then transferred to the phosphopantetheine arm of the polyketide synthase Pks13 for further chain extension. Can use dodecanoate (C12) and tetradecanoate (C14). The chain is Long-chain-fatty-acid--AMP ligase FadD32 (fadD32) from Mycobacterium marinum (strain ATCC BAA-535 / M).